Reading from the N-terminus, the 789-residue chain is Polyribonucleotide nucleotidyltransferase (789 aa).

D494 and D500 together coordinate Mg(2+). In terms of domain architecture, KH spans 561–620; that stretch reads PRIESIFINKDKIRNVIGSGGKNIREICEKTGARVEIMQDGTVMIYAINNDAVEYAKNMI. Residues 630 to 697 form the S1 motif domain; that stretch reads GKVFDGTVIE…DREYVQLSMR (68 aa). Residues 709 to 789 form a disordered region; that stretch reads GELYNIRKTN…NEVPRKPRFF (81 aa). The span at 737–749 shows a compositional bias: basic residues; the sequence is SEKKRRGSGRSRR. The span at 763–780 shows a compositional bias: low complexity; the sequence is NNGFGNGNRSFNDNRNGN.

This sequence belongs to the polyribonucleotide nucleotidyltransferase family. It depends on Mg(2+) as a cofactor.

It localises to the cytoplasm. It carries out the reaction RNA(n+1) + phosphate = RNA(n) + a ribonucleoside 5'-diphosphate. In terms of biological role, involved in mRNA degradation. Catalyzes the phosphorolysis of single-stranded polyribonucleotides processively in the 3'- to 5'-direction. This Ehrlichia ruminantium (strain Welgevonden) protein is Polyribonucleotide nucleotidyltransferase.